The chain runs to 479 residues: Muscarinic acetylcholine receptor M4 (479 aa).

Residues 1–31 are Extracellular-facing; the sequence is MANFTPVNGSSGNQSVRLVTSSSHNRYETVE. N-linked (GlcNAc...) asparagine glycosylation is found at Asn-8 and Asn-13. A helical membrane pass occupies residues 32–54; that stretch reads MVFIATVTGSLSLVTVVGNILVM. The Cytoplasmic segment spans residues 55–68; that stretch reads LSIKVNRQLQTVNN. Residues 69–89 traverse the membrane as a helical segment; that stretch reads YFLFSLACADLIIGAFSMNLY. At 90–106 the chain is on the extracellular side; it reads TVYIIKGYWPLGAVVCD. A disulfide bridge connects residues Cys-105 and Cys-185. Residues 107–128 form a helical membrane-spanning segment; that stretch reads LWLALDYVVSNASVMNLLIISF. The Cytoplasmic portion of the chain corresponds to 129–148; the sequence is DRYFCVTKPLTYPARRTTKM. The chain crosses the membrane as a helical span at residues 149–171; it reads AGLMIAAAWVLSFVLWAPAILFW. At 172–193 the chain is on the extracellular side; sequence QFVVGKRTVPDNQCFIQFLSNP. Residues 194–216 form a helical membrane-spanning segment; the sequence is AVTFGTAIAAFYLPVVIMTVLYI. Residues 217-401 lie on the Cytoplasmic side of the membrane; it reads HISLASRSRV…AARERKVTRT (185 aa). Residues 271-333 are disordered; sequence KLEEAPPPAL…PAPPLQPRAL (63 aa). Over residues 275–286 the composition is skewed to pro residues; that stretch reads APPPALPPPPRP. Residues 294–304 show a composition bias toward polar residues; sequence NESSSGSATQN. A helical membrane pass occupies residues 402–422; it reads IFAILLAFILTWTPYNVMVLV. Over 423 to 436 the chain is Extracellular; that stretch reads NTFCQSCIPDTVWS. The chain crosses the membrane as a helical span at residues 437-456; it reads IGYWLCYVNSTINPACYALC. Over 457–479 the chain is Cytoplasmic; the sequence is NATFKKTFRHLLLCQYRNIGTAR. 3 positions are modified to phosphothreonine: Thr-459, Thr-463, and Thr-477.

The protein belongs to the G-protein coupled receptor 1 family. Muscarinic acetylcholine receptor subfamily. CHRM4 sub-subfamily.

It localises to the cell membrane. The protein resides in the postsynaptic cell membrane. In terms of biological role, the muscarinic acetylcholine receptor mediates various cellular responses, including inhibition of adenylate cyclase, breakdown of phosphoinositides and modulation of potassium channels through the action of G proteins. Primary transducing effect is inhibition of adenylate cyclase. This chain is Muscarinic acetylcholine receptor M4 (CHRM4), found in Homo sapiens (Human).